The sequence spans 448 residues: Proline iminopeptidase aneH (448 aa).

One can recognise an AB hydrolase-1 domain in the interval 64–191 (PWMLYLQGGP…VEVFIGGGPC (128 aa)). The active-site Nucleophile is the S164. Residue D397 is part of the active site. Catalysis depends on H425, which acts as the Proton donor.

The protein belongs to the peptidase S33 family. In terms of assembly, homooligomer.

The protein localises to the cytoplasm. The catalysed reaction is Release of N-terminal proline from a peptide.. It functions in the pathway secondary metabolite biosynthesis. Its function is as follows. Proline iminopeptidase; part of the gene cluster that mediates the biosynthesis of aculenes, a unique type of norsesquiterpenes that contain a nordaucane skeleton linked to an L-proline moiety and are of mixed biosynthetic origin. The pathway begins with the synthesis of dauca-4,7-diene by the terpene cyclase aneC using farnesyl pyrophosphate (FPP) as substrate. The cytochrome P450 monooxygenase aneF then performs the initial oxidation at C-12 of dauca-4,7-diene to yield asperaculane D. Asperaculane D is substrate of the cytochrome P450 monooxygenase aneD for C-10 hydroxylation to yield asperaculane E. The cytochrome P450 monooxygenase aneG then converts asperaculane E into aculene D via C-2 oxidation. The monomodular nonribosomal peptide synthtase aneB adenylates L-proline and the thiohydrolase aneE transfers this activated L-proline derivative to aculenes D and C to produce respectively aculenes B and A. The dioxygenase aneA converts aculene D into aculene C, and aculene B into aculene A by introducing the 5,6-alkene moiety. Asperculanes A, B, C and F, as well as 14-prolyl asperculane C, might be shunt products of the pathway. This is Proline iminopeptidase aneH from Aspergillus aculeatus (strain ATCC 16872 / CBS 172.66 / WB 5094).